The chain runs to 906 residues: MCRIVGAPRTLLPLLAALLQASVEASGGIALCKTGFPEDVYSAVLSQDVHEGQPLLNVKFSNCNGKRKVQYESSEPADFKVDEDGMVYAVRSFPLSSEHAKFLIYAQDKETQEKWQVAVKLSLKPNLPEDSVKESQEIEEIVFPRQLMKHNGHLQRQKRDWVIPPINLPENSRGPFPQELVRIRSDRDKNLSLRYSVTGPGADQPPTGIFIINPISGQLSVTKPLDRELIARFHLRAHAVDINGNQVENPIDIVINVIDMNDNRPEFLHQVWNGTVPEGSKPGTYVMTVTAIDDDDPNTLNGMLRYRILSQAPSTPSPNMFTINNETGDIITVAAGLDREKVQQYMLIIQATDTEGSPTYGLSNTATAVITVTDVNDNPPEFTAMSFYGEVPENRVDVIVANLTVTDKDQPHTPAWNAVYRISGGDPTGRFAIQTDPNSNDGLVTVVKPIDFETNRMFVLTVAAENQVPLAKGIQHPPQSTATVSVTVIDVNENPYFAPNPKIIRQEEGLHAGTMLTTFTAQDPDRYMPQNIRYTKLSDPANWLKIDPVNGQITTIAVLDRESPNVKNNIYNATFLASDNGIPPMSGTGTLQIYLLDINDNAPQVVPQEAETCETPDPNSINITALDYDIDPNAGPFAFDLPLSPVTIKRNWTITRLNGDFAQLNLKIKFLEAGIYEVPIIITDSGNPPKSNISILRVKVCQCDSNGDCTDVDRIVGAGLGTGAIIAILLCIIILLILVLMFVVWMKRRDKERQAKQLLIDPEDDVRDNILKYDEEGGGEEDQDYDLSQLQQPDTVEPDAIKPVGIRRLDERPIHAEPQYPVRSAAPHPGDIGDFINEGLKAADNDPTAPPYDSLLVFDYEGSGSTAGSLSSLNSSSSGGEQDYDYLNDWGPRFKKLADMYGGGDD.

The signal sequence occupies residues 1–25 (MCRIVGAPRTLLPLLAALLQASVEA). The propeptide occupies 26-159 (SGGIALCKTG…HNGHLQRQKR (134 aa)). A phosphoserine mark is found at S96 and S135. Cadherin domains follow at residues 160–267 (DWVI…RPEF), 268–382 (LHQV…PPEF), 383–497 (TAMS…NPYF), 498–603 (APNP…DNAP), and 604–714 (QVVP…DVDR). Over 160-724 (DWVIPPINLP…IVGAGLGTGA (565 aa)) the chain is Extracellular. E170 contacts Ca(2+). The N-linked (GlcNAc...) asparagine glycan is linked to N190. Positions 226, 228, 259, 260, 261, 262, and 263 each coordinate Ca(2+). A glycan (N-linked (GlcNAc...) asparagine) is linked at N273. The Ca(2+) site is built by D293, D295, and N301. N325 carries an N-linked (GlcNAc...) asparagine glycan. A Ca(2+)-binding site is contributed by D353. N-linked (GlcNAc...) asparagine glycans are attached at residues N402, N572, N622, N651, and N692. Residues 725–745 (IIAILLCIIILLILVLMFVVW) traverse the membrane as a helical segment. Topologically, residues 746–906 (MKRRDKERQA…LADMYGGGDD (161 aa)) are cytoplasmic. Residues 863-880 (SGSTAGSLSSLNSSSSGG) are compositionally biased toward low complexity. The segment at 863–884 (SGSTAGSLSSLNSSSSGGEQDY) is disordered.

In terms of assembly, homodimer (via extracellular region). Can also form heterodimers with other cadherins (via extracellular region). Dimerization occurs in trans, i.e. with a cadherin chain from another cell. Interacts with CDCP1. Interacts with PCDH8; this complex may also include TAOK2. The interaction with PCDH8 may lead to internalization through TAOK2/p38 MAPK pathway. Identified in a complex containing FGFR4, NCAM1, CDH2, PLCG1, FRS2, SRC, SHC1, GAP43 and CTTN. May interact with OBSCN (via protein kinase domain 2). Interacts with FBXO45. Cleaved by MMP24. Ectodomain cleavage leads to the generation of a soluble 90 kDa N-terminal soluble fragment and a 45 kDa membrane-bound C-terminal fragment 1 (CTF1), which is further cleaved by gamma-secretase into a 35 kDa. Cleavage in neural stem cells by MMP24 affects CDH2-mediated anchorage of neural stem cells to ependymocytes in the adult subependymal zone, leading to modulate neural stem cell quiescence. Post-translationally, may be phosphorylated by OBSCN.

It localises to the cell membrane. The protein localises to the sarcolemma. Its subcellular location is the cell junction. It is found in the cell surface. The protein resides in the desmosome. It localises to the adherens junction. Calcium-dependent cell adhesion protein; preferentially mediates homotypic cell-cell adhesion by dimerization with a CDH2 chain from another cell. Cadherins may thus contribute to the sorting of heterogeneous cell types. Acts as a regulator of neural stem cells quiescence by mediating anchorage of neural stem cells to ependymocytes in the adult subependymal zone: upon cleavage by MMP24, CDH2-mediated anchorage is affected, leading to modulate neural stem cell quiescence. Plays a role in cell-to-cell junction formation between pancreatic beta cells and neural crest stem (NCS) cells, promoting the formation of processes by NCS cells. CDH2 may be involved in neuronal recognition mechanism. In hippocampal neurons, may regulate dendritic spine density. The protein is Cadherin-2 (CDH2) of Rhinolophus ferrumequinum (Greater horseshoe bat).